Consider the following 488-residue polypeptide: Bifunctional NAD(P)H-hydrate repair enzyme Nnr (488 aa).

The segment at 1–214 is NAD(P)H-hydrate epimerase; sequence MTVLYQNRQI…LSESFFRAVF (214 aa). Residues 10-211 form the YjeF N-terminal domain; it reads IRELERLAVE…RLGLSESFFR (202 aa). The NADPHX 1; for epimerase activity stretch occupies residues 57 to 61; sequence NNGGD. 2 residues coordinate K(+): Asn-58 and Asp-121. The segment at 125–131 is NADPHX 1; for epimerase activity; it reads GSGLSGE. Tyr-136 and Asp-154 together coordinate (6S)-NADPHX. A K(+)-binding site is contributed by Ser-157. The 268-residue stretch at 221–488 folds into the YjeF C-terminal domain; the sequence is EWKGVFPLLP…FPHLRVLVNP (268 aa). The tract at residues 221-488 is ADP-dependent (S)-NAD(P)H-hydrate dehydratase; it reads EWKGVFPLLP…FPHLRVLVNP (268 aa). Gly-317 serves as a coordination point for (6S)-NADPHX. The interval 363-369 is NADPHX 2; for dehydratase activity; that stretch reads HPGEASR. Residues 400–404 and 420–429 each bind ADP; these read KGVGT and NPGMATGGMG. Asp-430 is a binding site for (6S)-NADPHX.

In the N-terminal section; belongs to the NnrE/AIBP family. The protein in the C-terminal section; belongs to the NnrD/CARKD family. K(+) is required as a cofactor.

The catalysed reaction is (6S)-NADHX + ADP = AMP + phosphate + NADH + H(+). It catalyses the reaction (6S)-NADPHX + ADP = AMP + phosphate + NADPH + H(+). The enzyme catalyses (6R)-NADHX = (6S)-NADHX. It carries out the reaction (6R)-NADPHX = (6S)-NADPHX. Its function is as follows. Bifunctional enzyme that catalyzes the epimerization of the S- and R-forms of NAD(P)HX and the dehydration of the S-form of NAD(P)HX at the expense of ADP, which is converted to AMP. This allows the repair of both epimers of NAD(P)HX, a damaged form of NAD(P)H that is a result of enzymatic or heat-dependent hydration. This is Bifunctional NAD(P)H-hydrate repair enzyme Nnr (nnr) from Coxiella burnetii (strain RSA 493 / Nine Mile phase I).